The chain runs to 1763 residues: Genome polyprotein (1763 aa).

Residues 458 to 614 (DGVITSCNKR…ESHKRARPGT (157 aa)) form the SF3 helicase domain. An ATP-binding site is contributed by 484–491 (GPPGCGKT). Residues 981-986 (DDEYDE) form an acidic region. Position 984 is an O-(5'-phospho-RNA)-tyrosine (Y984). At T1040 the chain carries Phosphothreonine. S1067 carries the phosphoserine modification. One can recognise a Peptidase C24 domain in the interval 1073 to 1229 (GPGTKFHKNA…KLVVPYVHID (157 aa)). Catalysis depends on for 3CLpro activity residues H1110, E1131, and C1193. One can recognise a RdRp catalytic domain in the interval 1478 to 1603 (AKVFAVDYSK…MFPIMYASIS (126 aa)).

As to quaternary structure, homodimer. Interacts with NTPase, protein p30 and protease-polymerase p76. In terms of assembly, interacts with capsid protein VP1 and protease-polymerase p76. Interacts with host IEF4e; this interaction plays a role in translation of viral proteins. Homooligomer. Interacts with Vpg, protein p32 and may interact with capsid protein VP1. Specific enzymatic cleavages in vivo yield mature proteins. Pro-Pol is first autocatalytically cleaved, then processes the whole polyprotein. In terms of processing, VPg is uridylylated by the polymerase and is covalently attached to the 5'-end of the polyadenylated genomic and subgenomic RNAs. This uridylylated form acts as a nucleotide-peptide primer for the polymerase.

The protein localises to the host endoplasmic reticulum membrane. It carries out the reaction a ribonucleoside 5'-triphosphate + H2O = a ribonucleoside 5'-diphosphate + phosphate + H(+). The enzyme catalyses RNA(n) + a ribonucleoside 5'-triphosphate = RNA(n+1) + diphosphate. The catalysed reaction is Endopeptidase with a preference for cleavage when the P1 position is occupied by Glu-|-Xaa and the P1' position is occupied by Gly-|-Yaa.. Together with NTPase and NS4, initiates the formation of the replication complex. Induces the proliferation of the host smooth ER membranes forming long tubular structures. These remodeled membranes probably form the viral factories that contain the replication complex. Its function is as follows. Displays NTPase activity, but no helicase activity. Induces the formation of convoluted membranes derived from the host ER. These remodeled membranes probably form the viral factories that contain the replication complex. Together with NS2 and NS4, initiates the formation of the replication complex. Functionally, probable key protein responsible for the formation of membrane alterations by the virus. Induces the formation of convoluted membranes derived from the host ER. These remodeled membranes probably form the viral factories that contain the replication complex. Together with NS2 and NTPase, initiates the formation of the replication complex. In terms of biological role, viral genome-linked protein is covalently linked to the 5'-end of the positive-strand, negative-strand genomic RNAs and subgenomic RNA. Acts as a genome-linked replication primer. May recruit ribosome to viral RNA thereby promoting viral proteins translation. Interacts with host translation initiation complex to allow the translation of viral proteins. Protease-polymerase p76 processes the polyprotein: Pro-Pol is first released by autocleavage, then all other proteins are cleaved. Cleaves host translation initiation factor eIF4G1, eIF4G2 and PABP1 thereby inducing a shutdown of host protein synthesis. This shutdown may not prevent viral mRNA from being translated since viral Vpg replaces the cap. It is also an RNA-directed RNA polymerase which replicates genomic and antigenomic viral RNA by recognizing specific signals. Also transcribes a subgenomic mRNA by initiating RNA synthesis internally on antigenomic RNA. This sgRNA codes for structural proteins. Catalyzes the covalent attachment VPg with viral RNAs. Cleaves host G3BP1 thereby preventing the assembly of host stress granules. The chain is Genome polyprotein from Felidae (cat family).